Here is a 121-residue protein sequence, read N- to C-terminus: Transposase InsC for insertion element IS2A (121 aa).

It belongs to the transposase 8 family.

Involved in the transposition of the insertion sequence IS2. In Escherichia coli (strain K12), this protein is Transposase InsC for insertion element IS2A (insC1).